The sequence spans 369 residues: Serine/threonine-protein acetyltransferase HopZ1a (369 aa).

The interval 1–46 is disordered; sequence MGNVCVGGSRMSHQVYSPDRADTPPRSERNTPDRRQRAAGDAERTQ. The span at 19–46 shows a compositional bias: basic and acidic residues; it reads DRADTPPRSERNTPDRRQRAAGDAERTQ. 1D-myo-inositol hexakisphosphate contacts are provided by Arg-49, Lys-53, and Arg-106. Active-site residues include His-150 and Glu-170. His-150 contacts CoA. Residues Ala-177 and 211–212 each bind CoA; that span reads KT. Cys-216 is an active-site residue. 1D-myo-inositol hexakisphosphate-binding positions include Asn-222, 226–229, and 289–290; these read KAHK and KH. N6-acetyllysine; by autocatalysis is present on Lys-289. 292–295 is a CoA binding site; the sequence is ASLT. 1D-myo-inositol hexakisphosphate is bound by residues 314–317 and Arg-326; that span reads SEGH. Residues 331–334 and 344–348 contribute to the CoA site; these read RVKR and SNTQF. The 1D-myo-inositol hexakisphosphate site is built by Gln-358 and Arg-362.

It belongs to the acetyltransferase YopJ family. Interacts with host plant JAZ proteins (e.g. Glycine max JAZ1 and Arabidospis thaliana TIFY10B/JAZ2, TIFY11A/JAZ5, TIFY11B/JAZ6, TIFY5A/JAZ8 and TIFY3B/JAZ12) and triggers their degradation. Binds directly to SZE1 and SZE2 at the host plasma membrane; this interaction with a complex made of, at least, SZE1, BKN2/SZE2, ZAR1 and ZED1 triggers host immunity. Requires 1D-myo-inositol hexakisphosphate as cofactor. Autoacetylated at Lys-289; while autoacetylation at Lys-289 is required for virulence function to some extent, it is not essential.

It is found in the secreted. The protein localises to the host cell membrane. It localises to the host cytoplasm. Its subcellular location is the host cytoskeleton. The protein resides in the host nucleus. The enzyme catalyses L-threonyl-[protein] + acetyl-CoA = O-acetyl-L-threonyl-[protein] + CoA. The catalysed reaction is L-seryl-[protein] + acetyl-CoA = O-acetyl-L-seryl-[protein] + CoA. It carries out the reaction L-lysyl-[protein] + acetyl-CoA = N(6)-acetyl-L-lysyl-[protein] + CoA + H(+). Its activity is regulated as follows. 1D-myo-inositol hexakisphosphate activates protein-acetyltransferase activity via an allosteric mechanism: 1D-myo-inositol hexakisphosphate-binding induces a conformational rearrangement that stimulates the interaction with acetyl-CoA. Acetyltransferase activity is activated by phytic acid. Functionally, serine/threonine-protein acetyltransferase translocated into infected cells, which impairs host microtubule network and host immunity by mediating acetylation of target proteins. Blocks secretion in host cells by mediating acetylation of host tubulin, thereby impairing host microbubule network. Impairs host cell immunity by mediating acetylation of host TIFY/JAZ transcription repressors (Arabidopsis thaliana TIFY10B/JAZ2, TIFY11A/JAZ5, TIFY11B/JAZ6, TIFY5A/JAZ8, TIFY9/JAZ10 and TIFY3B/JAZ12), thereby activating host jasmonate signaling. The polypeptide is Serine/threonine-protein acetyltransferase HopZ1a (Pseudomonas syringae pv. syringae).